Here is a 340-residue protein sequence, read N- to C-terminus: Holliday junction branch migration complex subunit RuvB (340 aa).

The segment at methionine 1–tyrosine 184 is large ATPase domain (RuvB-L). ATP is bound by residues leucine 23, arginine 24, glycine 65, lysine 68, threonine 69, threonine 70, glutamate 131 to phenylalanine 133, arginine 174, tyrosine 184, and arginine 221. Threonine 69 lines the Mg(2+) pocket. The tract at residues asparagine 185–histidine 255 is small ATPAse domain (RuvB-S). The segment at alanine 258–phenylalanine 340 is head domain (RuvB-H). Arginine 313 and arginine 318 together coordinate DNA.

Belongs to the RuvB family. Homohexamer. Forms an RuvA(8)-RuvB(12)-Holliday junction (HJ) complex. HJ DNA is sandwiched between 2 RuvA tetramers; dsDNA enters through RuvA and exits via RuvB. An RuvB hexamer assembles on each DNA strand where it exits the tetramer. Each RuvB hexamer is contacted by two RuvA subunits (via domain III) on 2 adjacent RuvB subunits; this complex drives branch migration. In the full resolvosome a probable DNA-RuvA(4)-RuvB(12)-RuvC(2) complex forms which resolves the HJ.

It is found in the cytoplasm. It catalyses the reaction ATP + H2O = ADP + phosphate + H(+). The RuvA-RuvB-RuvC complex processes Holliday junction (HJ) DNA during genetic recombination and DNA repair, while the RuvA-RuvB complex plays an important role in the rescue of blocked DNA replication forks via replication fork reversal (RFR). RuvA specifically binds to HJ cruciform DNA, conferring on it an open structure. The RuvB hexamer acts as an ATP-dependent pump, pulling dsDNA into and through the RuvAB complex. RuvB forms 2 homohexamers on either side of HJ DNA bound by 1 or 2 RuvA tetramers; 4 subunits per hexamer contact DNA at a time. Coordinated motions by a converter formed by DNA-disengaged RuvB subunits stimulates ATP hydrolysis and nucleotide exchange. Immobilization of the converter enables RuvB to convert the ATP-contained energy into a lever motion, pulling 2 nucleotides of DNA out of the RuvA tetramer per ATP hydrolyzed, thus driving DNA branch migration. The RuvB motors rotate together with the DNA substrate, which together with the progressing nucleotide cycle form the mechanistic basis for DNA recombination by continuous HJ branch migration. Branch migration allows RuvC to scan DNA until it finds its consensus sequence, where it cleaves and resolves cruciform DNA. The chain is Holliday junction branch migration complex subunit RuvB from Flavobacterium psychrophilum (strain ATCC 49511 / DSM 21280 / CIP 103535 / JIP02/86).